A 328-amino-acid chain; its full sequence is MRPVRLMKVFVTRRIPAEGRVALARAADCEVEQWDSDEPIPAKELERGVAGAHGLLCLLSDHVDKRILDAAGANLKVISTMSVGIDHLALDEIKKRGIRVGYTPDVLTDTTAELAVSLLLTTCRRLPEAIEEVKNGGWTSWKPLWLCGYGLTQSTVGIIGLGRIGQAIARRLKPFGVQRFLYTGRQPRPEEAAEFQAEFVSTPELAAQSDFIVVACSLTPATEGLCNKDFFQKMKETAVFINISRGDVVNQDDLYQALASGKIAAAGLDVTSPEPLPTNHPLLTLKNCVILPHIGSATHRTRNTMSLLAANNLLAGLRGEPMPSELKL.

Phosphoserine is present on Ser36. 83–84 (VG) contributes to the substrate binding site. Residues 162-164 (GRI), 185-188 (RQPR), Ser217, and Ile243 each bind NADP(+). Arg245 and Asp269 together coordinate substrate. Phosphoserine is present on Ser272. His293 serves as the catalytic Proton donor. 293-296 (HIGS) serves as a coordination point for substrate. Residue Gly295 coordinates NADP(+). Thr298 is modified (phosphothreonine).

This sequence belongs to the D-isomer specific 2-hydroxyacid dehydrogenase family. In terms of assembly, homodimer. Ubiquitous. Most abundantly expressed in the liver.

It carries out the reaction glycolate + NADP(+) = glyoxylate + NADPH + H(+). The catalysed reaction is (R)-glycerate + NAD(+) = 3-hydroxypyruvate + NADH + H(+). The enzyme catalyses (R)-glycerate + NADP(+) = 3-hydroxypyruvate + NADPH + H(+). Functionally, enzyme with hydroxy-pyruvate reductase, glyoxylate reductase and D-glycerate dehydrogenase enzymatic activities. Reduces hydroxypyruvate to D-glycerate, glyoxylate to glycolate, oxidizes D-glycerate to hydroxypyruvate. This is Glyoxylate reductase/hydroxypyruvate reductase (GRHPR) from Homo sapiens (Human).